Here is a 382-residue protein sequence, read N- to C-terminus: D-galactonate dehydratase (382 aa).

Asp183 contributes to the Mg(2+) binding site. The Proton donor role is filled by His185. The Mg(2+) site is built by Glu209 and Glu235. His285 (proton acceptor) is an active-site residue.

It belongs to the mandelate racemase/muconate lactonizing enzyme family. GalD subfamily. Mg(2+) serves as cofactor.

The catalysed reaction is D-galactonate = 2-dehydro-3-deoxy-D-galactonate + H2O. It functions in the pathway carbohydrate acid metabolism; D-galactonate degradation; D-glyceraldehyde 3-phosphate and pyruvate from D-galactonate: step 1/3. Functionally, catalyzes the dehydration of D-galactonate to 2-keto-3-deoxy-D-galactonate. The protein is D-galactonate dehydratase of Klebsiella pneumoniae subsp. pneumoniae (strain ATCC 700721 / MGH 78578).